The chain runs to 198 residues: Glycerol-3-phosphate acyltransferase (198 aa).

The next 5 helical transmembrane spans lie at 5–25, 56–76, 84–104, 114–134, and 158–178; these read LILLSLLAYVIGSIPSGLWIG, SIVTVMDILKGTVATLLPFFF, FWLLTGAFAIIGHSFPLFAGF, AGVILAYAPLLFVAALVVFLV, and LFMGDWILIVLVACIALFVIW.

This sequence belongs to the PlsY family. Probably interacts with PlsX.

Its subcellular location is the cell membrane. It catalyses the reaction an acyl phosphate + sn-glycerol 3-phosphate = a 1-acyl-sn-glycero-3-phosphate + phosphate. It functions in the pathway lipid metabolism; phospholipid metabolism. In terms of biological role, catalyzes the transfer of an acyl group from acyl-phosphate (acyl-PO(4)) to glycerol-3-phosphate (G3P) to form lysophosphatidic acid (LPA). This enzyme utilizes acyl-phosphate as fatty acyl donor, but not acyl-CoA or acyl-ACP. This Listeria monocytogenes serovar 1/2a (strain ATCC BAA-679 / EGD-e) protein is Glycerol-3-phosphate acyltransferase.